Consider the following 545-residue polypeptide: Glucose-6-phosphate isomerase (545 aa).

The active-site Proton donor is the glutamate 351. Active-site residues include histidine 382 and lysine 510.

The protein belongs to the GPI family.

The protein resides in the cytoplasm. It carries out the reaction alpha-D-glucose 6-phosphate = beta-D-fructose 6-phosphate. Its pathway is carbohydrate biosynthesis; gluconeogenesis. The protein operates within carbohydrate degradation; glycolysis; D-glyceraldehyde 3-phosphate and glycerone phosphate from D-glucose: step 2/4. In terms of biological role, catalyzes the reversible isomerization of glucose-6-phosphate to fructose-6-phosphate. This chain is Glucose-6-phosphate isomerase, found in Shewanella sp. (strain MR-7).